Here is a 190-residue protein sequence, read N- to C-terminus: Pyridoxamine 5'-phosphate oxidase C1952.08c homolog (190 aa).

FMN is bound by residues Ser-62 and Lys-69.

This sequence belongs to the pyridoxamine 5'-phosphate oxidase family. FMN serves as cofactor.

The protein resides in the cytoplasm. It localises to the nucleus. The sequence is that of Pyridoxamine 5'-phosphate oxidase C1952.08c homolog from Schizosaccharomyces pombe (strain 972 / ATCC 24843) (Fission yeast).